We begin with the raw amino-acid sequence, 365 residues long: Aminomethyltransferase (365 aa).

It belongs to the GcvT family. As to quaternary structure, the glycine cleavage system is composed of four proteins: P, T, L and H.

It carries out the reaction N(6)-[(R)-S(8)-aminomethyldihydrolipoyl]-L-lysyl-[protein] + (6S)-5,6,7,8-tetrahydrofolate = N(6)-[(R)-dihydrolipoyl]-L-lysyl-[protein] + (6R)-5,10-methylene-5,6,7,8-tetrahydrofolate + NH4(+). In terms of biological role, the glycine cleavage system catalyzes the degradation of glycine. This chain is Aminomethyltransferase, found in Aeromonas hydrophila subsp. hydrophila (strain ATCC 7966 / DSM 30187 / BCRC 13018 / CCUG 14551 / JCM 1027 / KCTC 2358 / NCIMB 9240 / NCTC 8049).